The primary structure comprises 211 residues: ATP phosphoribosyltransferase (211 aa).

It belongs to the ATP phosphoribosyltransferase family. Short subfamily. As to quaternary structure, heteromultimer composed of HisG and HisZ subunits.

The protein resides in the cytoplasm. The catalysed reaction is 1-(5-phospho-beta-D-ribosyl)-ATP + diphosphate = 5-phospho-alpha-D-ribose 1-diphosphate + ATP. Its pathway is amino-acid biosynthesis; L-histidine biosynthesis; L-histidine from 5-phospho-alpha-D-ribose 1-diphosphate: step 1/9. Functionally, catalyzes the condensation of ATP and 5-phosphoribose 1-diphosphate to form N'-(5'-phosphoribosyl)-ATP (PR-ATP). Has a crucial role in the pathway because the rate of histidine biosynthesis seems to be controlled primarily by regulation of HisG enzymatic activity. This chain is ATP phosphoribosyltransferase, found in Pseudomonas fluorescens (strain SBW25).